An 85-amino-acid chain; its full sequence is MEERNLRKTRTGKVISNKMDKTIVVAVQDNVKHPLYNKIVKRTYKLKAHDENNECLIGDVVKVMETRPLSKDKRWRLVEIISRAK.

This sequence belongs to the universal ribosomal protein uS17 family. Part of the 30S ribosomal subunit.

One of the primary rRNA binding proteins, it binds specifically to the 5'-end of 16S ribosomal RNA. This is Small ribosomal subunit protein uS17 from Lachnospira eligens (strain ATCC 27750 / DSM 3376 / VPI C15-48 / C15-B4) (Eubacterium eligens).